The primary structure comprises 479 residues: tRNA-dihydrouridine(20) synthase [NAD(P)+] (479 aa).

FMN-binding positions include Pro-14–Val-16 and Gln-87. Cys-116 acts as the Proton donor in catalysis. Residues Lys-159, His-187, Asn-221–Asp-223, and Ala-245–Arg-246 contribute to the FMN site.

It belongs to the Dus family. Dus2 subfamily. The cofactor is FMN.

Its subcellular location is the cytoplasm. It localises to the nucleus. The catalysed reaction is 5,6-dihydrouridine(20) in tRNA + NADP(+) = uridine(20) in tRNA + NADPH + H(+). It catalyses the reaction 5,6-dihydrouridine(20) in tRNA + NAD(+) = uridine(20) in tRNA + NADH + H(+). It carries out the reaction a 5,6-dihydrouridine in mRNA + NAD(+) = a uridine in mRNA + NADH + H(+). The enzyme catalyses a 5,6-dihydrouridine in mRNA + NADP(+) = a uridine in mRNA + NADPH + H(+). In terms of biological role, catalyzes the NADPH-dependent synthesis of dihydrouridine, a modified base found in the D-loop of most tRNAs. Specifically modifies U20 in cytoplasmic tRNAs. Also able to mediate dihydrouridylation of some mRNAs, thereby affecting their translation. This Schizosaccharomyces pombe (strain 972 / ATCC 24843) (Fission yeast) protein is tRNA-dihydrouridine(20) synthase [NAD(P)+].